The primary structure comprises 732 residues: MFIKKEIDLGQGKVITIETGKMAKQADGSAVVRLNDTMVLATVVSSKTPPPPSQDFFPLQVEYREKYSAAGKFPGGFFKREGRPSEKEILSARLIDRALRPLFPDGYYQETQIIISVISSDTINDADVLGGIAASAAIMVSDIPFANPMSEVRVGRINGQFIVNPDTEELQRSDLDICIGGTEDTICMLEGEMKEISEAEMLDAIKFGHEAIKKLCAFQKELAAEVAKPKRAFAPTVAPAELVAFIEANCAAELKALAYTPLAKEERSDRTKAIYKETIAKTLEHFSSITAEEIAANPEKALCQSEHMIDECIHDVEKKVMRHMILDDSKRLDGRTLEQVRPISIELGLIPRAHGSALFTRGETQALVTLTLGTKKDAQSVDTLTDDKDKRFMLHYNFPPFSVGETGRVGGTGRREIGHGNLAERAIKMVMPAEQEFPYTVRLVSDILESNGSSSMASVCGGTLAAMDGGIPLKKPVSGIAMGLIKEGDRYAVLSDILGNEDHLGDMDFKVSGTRDGITACQMDIKIDGLDYHILETALEQARKGRLHILDVMTEAIPESREDIGKYAPRLTSIQIPVDAIGMVIGKGGETIRSITEETGAEINIDDDGTVTIACSSPEGTKAAVETIKTLVSKPEVGTIYMGKVRDIRDELGAFVEFLPKTDGLVHISEIARERIAKVSDVLKPGERVKVKLIDIRKDPRTGKTKFALSIKALLDTDQPAETNGEAKPARD.

2 residues coordinate Mg(2+): D502 and D508. The region spanning 569–628 (PRLTSIQIPVDAIGMVIGKGGETIRSITEETGAEINIDDDGTVTIACSSPEGTKAAVETI) is the KH domain. One can recognise an S1 motif domain in the interval 638–712 (GTIYMGKVRD…GKTKFALSIK (75 aa)).

Belongs to the polyribonucleotide nucleotidyltransferase family. It depends on Mg(2+) as a cofactor.

It localises to the cytoplasm. It carries out the reaction RNA(n+1) + phosphate = RNA(n) + a ribonucleoside 5'-diphosphate. Functionally, involved in mRNA degradation. Catalyzes the phosphorolysis of single-stranded polyribonucleotides processively in the 3'- to 5'-direction. This chain is Polyribonucleotide nucleotidyltransferase, found in Chlorobaculum parvum (strain DSM 263 / NCIMB 8327) (Chlorobium vibrioforme subsp. thiosulfatophilum).